A 473-amino-acid chain; its full sequence is MAAKTYNAGVKEYRQTYWTPEYTPKDTDLLACFKVTPQPGVAREEVAAAVAAESSTGTWTTVWTDLLTDLDYYKGRAYRIEDVPGDDTCFYAFVAYPIDLFEEGSIVNVLTSLVGNVFGFKALRALRLEDVRFPIAYVMTCGGPPHGIQVERDIMNKYGRPLLGCTIKPKLGLSAKNYGRAVYECLRGGLDFTKDDENVNSQPFMRWKQRFDFVQEATEKAQRETGERKGHYLNVTAPTPEEMYKRAEYAKEIGAPIIMHDYLTGGFCANTGLANWCRDNGMLLHIHRAMHAVLDRNPHHGIHFRVLTKCLRLSGGDHLHSGTVVGKLEGDRDATLGWIDIMRDDFIKEDRSRGIMFDQDFGSMPGVMPVASGGIHVWHMPALVTIFGDDSVLQFGGGTLGHPWGNAAGAAANRVALEACVEARNKGVAVEKEGKSILTEAATHSPELKIAMETWKEIKFEFDTVDKLDVAHK.

Substrate-binding residues include Asn-116 and Thr-166. The active-site Proton acceptor is the Lys-168. Position 170 (Lys-170) interacts with substrate. 3 residues coordinate Mg(2+): Lys-194, Asp-196, and Glu-197. Lys-194 carries the N6-carboxylysine modification. His-287 serves as the catalytic Proton acceptor. Substrate-binding residues include Arg-288, His-320, and Ser-372.

It belongs to the RuBisCO large chain family. Type I subfamily. Heterohexadecamer of 8 large chains and 8 small chains. It depends on Mg(2+) as a cofactor.

The enzyme catalyses 2 (2R)-3-phosphoglycerate + 2 H(+) = D-ribulose 1,5-bisphosphate + CO2 + H2O. The catalysed reaction is D-ribulose 1,5-bisphosphate + O2 = 2-phosphoglycolate + (2R)-3-phosphoglycerate + 2 H(+). RuBisCO catalyzes two reactions: the carboxylation of D-ribulose 1,5-bisphosphate, the primary event in carbon dioxide fixation, as well as the oxidative fragmentation of the pentose substrate. Both reactions occur simultaneously and in competition at the same active site. The chain is Ribulose bisphosphate carboxylase large chain from Cupriavidus metallidurans (strain ATCC 43123 / DSM 2839 / NBRC 102507 / CH34) (Ralstonia metallidurans).